The sequence spans 471 residues: Ribulose bisphosphate carboxylase large chain (471 aa).

Substrate contacts are provided by Asn-119 and Thr-169. Lys-171 (proton acceptor) is an active-site residue. Lys-173 is a binding site for substrate. Mg(2+) contacts are provided by Lys-197, Asp-199, and Glu-200. At Lys-197 the chain carries N6-carboxylysine. The active-site Proton acceptor is the His-290. The substrate site is built by Arg-291, His-323, and Ser-375.

Belongs to the RuBisCO large chain family. Type I subfamily. In terms of assembly, heterohexadecamer of 8 large chains and 8 small chains; disulfide-linked. The disulfide link is formed within the large subunit homodimers. Mg(2+) serves as cofactor. In terms of processing, the disulfide bond which can form in the large chain dimeric partners within the hexadecamer appears to be associated with oxidative stress and protein turnover.

The protein localises to the carboxysome. The enzyme catalyses 2 (2R)-3-phosphoglycerate + 2 H(+) = D-ribulose 1,5-bisphosphate + CO2 + H2O. It catalyses the reaction D-ribulose 1,5-bisphosphate + O2 = 2-phosphoglycolate + (2R)-3-phosphoglycerate + 2 H(+). In terms of biological role, ruBisCO catalyzes two reactions: the carboxylation of D-ribulose 1,5-bisphosphate, the primary event in carbon dioxide fixation, as well as the oxidative fragmentation of the pentose substrate in the photorespiration process. Both reactions occur simultaneously and in competition at the same active site. The protein is Ribulose bisphosphate carboxylase large chain of Crocosphaera subtropica (strain ATCC 51142 / BH68) (Cyanothece sp. (strain ATCC 51142)).